The following is a 247-amino-acid chain: MAANAEPQQTQPAKHSEVGHKSLLQSDALYQYILETSVYPREPESMKELREITAKHPWNLMTTSADEGQFLNMLLKLINAKNTMEIGVYTGYSLLATALALPDDGKILAMDINRENFEIGLPVIEKAGLAHKIDFREGPALPLLDQLVQDEKNHGTYDFIFVDADKDNYINYHKRLIDLVKVGGLIGYDNTLWNGSVVAPADAPLRKYVRYYRDFVLELNKALAVDPRVEICMLPVGDGITLCRRVS.

Lys21 serves as a coordination point for substrate. Residues Thr63, Glu85, 87–88 (GV), Ser93, Asp111, and Ala140 each bind S-adenosyl-L-methionine. Residue Asp163 coordinates substrate. Asp163 is an a divalent metal cation binding site. An S-adenosyl-L-methionine-binding site is contributed by Asp165. Positions 189 and 190 each coordinate a divalent metal cation. Position 194 (Asn194) interacts with substrate.

It belongs to the class I-like SAM-binding methyltransferase superfamily. Cation-dependent O-methyltransferase family. CCoAMT subfamily. It depends on a divalent metal cation as a cofactor.

The enzyme catalyses (E)-caffeoyl-CoA + S-adenosyl-L-methionine = (E)-feruloyl-CoA + S-adenosyl-L-homocysteine + H(+). Its pathway is aromatic compound metabolism; phenylpropanoid biosynthesis. Methylates caffeoyl-CoA to feruloyl-CoA and 5-hydroxyferuloyl-CoA to sinapoyl-CoA. Plays a role in the synthesis of feruloylated polysaccharides. Involved in the reinforcement of the plant cell wall. Also involved in the responding to wounding or pathogen challenge by the increased formation of cell wall-bound ferulic acid polymers. In Eucalyptus globulus (Tasmanian blue gum), this protein is Caffeoyl-CoA O-methyltransferase 2 (CCOAOMT2).